The sequence spans 333 residues: Forkhead box protein unc-130 (333 aa).

The interval 1–126 (MLFSMESILS…MSGHRKSSHA (126 aa)) is disordered. Over residues 14 to 24 (PKLEPPPKLEP) the composition is skewed to basic and acidic residues. Residues 37–50 (RSNTRLSEPSTSAS) show a composition bias toward polar residues. A compositionally biased stretch (basic and acidic residues) spans 52–62 (LEHDLKFGESR). The segment covering 98–110 (SSDDAKDDDDDDD) has biased composition (acidic residues). The fork-head DNA-binding region spans 127–221 (KPPYSYIALI…DNGSFLRRRK (95 aa)). The tract at residues 304 to 333 (APVSSGQKRTSSSSSPNENGSSAVSDKLSA) is disordered. The span at 307-333 (SSGQKRTSSSSSPNENGSSAVSDKLSA) shows a compositional bias: low complexity.

Expressed in ventral body wall muscle. Expressed in the structural cells and two neurons of each ray in the male tail.

Its subcellular location is the nucleus. In terms of biological role, probable transcription factor. Binds to DNA sequence motif 5'-CTGTTTCA-3'. Required for the migration of distal tip cells (DTC) and axonal growth-cones along the dorsal-ventral axis of the body wall, acting by cell autonomous repression of unc-129/TGF-beta expression in ventral body muscle during embyogenesis. Binds to the promoter region of the unc-129 gene. Plays a role in dorsal-ventral patterning and fate specification of the postembryonic mesoderm. Involved in male tail morphogenesis and in embryogenesis. Plays a role in the development of sensory neurons and is required to repress AWA fate and promote ASG fate in the ASG chemosensory neurons. Regulates expression of a class of small RNAs, known as 21U-RNAs. In Caenorhabditis elegans, this protein is Forkhead box protein unc-130.